A 296-amino-acid polypeptide reads, in one-letter code: Acetyl-coenzyme A carboxylase carboxyl transferase subunit beta (296 aa).

The region spanning 25-294 (LWIKDPSTGE…NSDAPAPPEA (270 aa)) is the CoA carboxyltransferase N-terminal domain.

It belongs to the AccD/PCCB family. Acetyl-CoA carboxylase is a heterohexamer composed of biotin carboxyl carrier protein (AccB), biotin carboxylase (AccC) and two subunits each of ACCase subunit alpha (AccA) and ACCase subunit beta (AccD).

The protein localises to the cytoplasm. The catalysed reaction is N(6)-carboxybiotinyl-L-lysyl-[protein] + acetyl-CoA = N(6)-biotinyl-L-lysyl-[protein] + malonyl-CoA. The protein operates within lipid metabolism; malonyl-CoA biosynthesis; malonyl-CoA from acetyl-CoA: step 1/1. In terms of biological role, component of the acetyl coenzyme A carboxylase (ACC) complex. Biotin carboxylase (BC) catalyzes the carboxylation of biotin on its carrier protein (BCCP) and then the CO(2) group is transferred by the transcarboxylase to acetyl-CoA to form malonyl-CoA. This Brucella ovis (strain ATCC 25840 / 63/290 / NCTC 10512) protein is Acetyl-coenzyme A carboxylase carboxyl transferase subunit beta.